A 663-amino-acid chain; its full sequence is Transketolase 2 (663 aa).

Substrate is bound at residue His-25. Residues His-65 and Gly-113–Leu-115 each bind thiamine diphosphate. Mg(2+) is bound at residue Asp-154. Residues Gly-155 and Asn-184 each contribute to the thiamine diphosphate site. The Mg(2+) site is built by Asn-184 and Ile-186. His-259, Arg-356, and Ser-383 together coordinate substrate. His-259 contributes to the thiamine diphosphate binding site. The Proton donor role is filled by Glu-410. Phe-436 serves as a coordination point for thiamine diphosphate. Residues His-460, Asp-468, and Arg-519 each contribute to the substrate site.

This sequence belongs to the transketolase family. Homodimer. The cofactor is Mg(2+). Ca(2+) serves as cofactor. Requires Mn(2+) as cofactor. It depends on Co(2+) as a cofactor. Thiamine diphosphate is required as a cofactor.

The catalysed reaction is D-sedoheptulose 7-phosphate + D-glyceraldehyde 3-phosphate = aldehydo-D-ribose 5-phosphate + D-xylulose 5-phosphate. Catalyzes the transfer of a two-carbon ketol group from a ketose donor to an aldose acceptor, via a covalent intermediate with the cofactor thiamine pyrophosphate. The protein is Transketolase 2 (tkt2) of Vibrio parahaemolyticus serotype O3:K6 (strain RIMD 2210633).